The sequence spans 329 residues: U5 small nuclear ribonucleoprotein TSSC4 (329 aa).

Disordered stretches follow at residues methionine 1–threonine 88 and alanine 104–valine 156. Residues aspartate 22–proline 41 are compositionally biased toward low complexity. Residues serine 60, serine 67, serine 86, serine 132, serine 143, and serine 146 each carry the phosphoserine modification. The tract at residues valine 77–alanine 104 is hom2; mediates interaction with the U5 snRNP complexes and required for spliceosomal tri-snRNP complex assembly. The tract at residues valine 149–arginine 316 is interaction with SNRNP200. A hom3; mediates interaction with the U5 snRNP complexes region spans residues proline 150–leucine 186. The tract at residues phenylalanine 201–arginine 250 is hom4; necessary for interaction with the PRPF19 complex and required for spliceosomal tri-snRNP complex assembly. Lysine 217 is subject to N6-acetyllysine. Residues glycine 221–valine 329 form a disordered region. Residue serine 265 is modified to Phosphoserine. Residues glycine 306–asparagine 317 show a composition bias toward basic residues. Serine 321 carries the phosphoserine modification.

This sequence belongs to the TSSC4 family. Interacts in a RNA-independent manner with distinct U5 snRNP-containing complexes, the mono-U5 snRNP and the post-splicing U5 snRNP-PRPF19 complex. Interacts with SNRNP200; the interaction is direct, excludes recruitment of C9ORF78 and WBP4 to SNRNP200 and negatively regulates its RNA helicase activity. Interacts with PRPF8; the interaction is direct. In terms of tissue distribution, expressed in fetal brain, lung, liver and kidney. Widely expressed in adult tissues.

It is found in the nucleus. It localises to the cytoplasm. Functionally, protein associated with the U5 snRNP, during its maturation and its post-splicing recycling and which is required for spliceosomal tri-snRNP complex assembly in the nucleus. Has a molecular sequestering activity and transiently hinders SNRNP200 binding sites for constitutive splicing factors that intervene later during the assembly of the spliceosome and splicing. Together with its molecular sequestering activity, may also function as a molecular adapter and placeholder, coordinating the assembly of the U5 snRNP and its association with the U4/U6 di-snRNP. The protein is U5 small nuclear ribonucleoprotein TSSC4 of Homo sapiens (Human).